A 233-amino-acid polypeptide reads, in one-letter code: Protein AC81 (233 aa).

The next 2 helical transmembrane spans lie at 171–191 and 194–214; these read SFQT…VEKF and INLL…NYII.

It localises to the host nucleus. The protein resides in the host membrane. It is found in the virion. Its function is as follows. Plays an essential role in the assembly of nucleocapsids with envelopes. The sequence is that of Protein AC81 (AC81) from Autographa californica nuclear polyhedrosis virus (AcMNPV).